An 804-amino-acid chain; its full sequence is Lon protease 2 (804 aa).

The Lon N-terminal domain occupies 19–216 (VPILPLRNSV…LVLAMVGRQL (198 aa)). 367–374 (GPPGVGKT) is an ATP binding site. The region spanning 603-784 (TLQPGVATGL…EEILPLVLEP (182 aa)) is the Lon proteolytic domain. Active-site residues include Ser-690 and Lys-733. Positions 782-804 (LEPPRRAPAQSASPEELEEQAGV) are disordered.

The protein belongs to the peptidase S16 family. As to quaternary structure, homohexamer. Organized in a ring with a central cavity.

The protein resides in the cytoplasm. The catalysed reaction is Hydrolysis of proteins in presence of ATP.. Functionally, ATP-dependent serine protease that mediates the selective degradation of mutant and abnormal proteins as well as certain short-lived regulatory proteins. Required for cellular homeostasis and for survival from DNA damage and developmental changes induced by stress. Degrades polypeptides processively to yield small peptide fragments that are 5 to 10 amino acids long. Binds to DNA in a double-stranded, site-specific manner. In Sorangium cellulosum (strain So ce56) (Polyangium cellulosum (strain So ce56)), this protein is Lon protease 2.